The chain runs to 131 residues: uncharacterized protein (131 aa).

The segment at 13–32 (TYSPLPEPPPTPALGGQRGP) is disordered.

This is an uncharacterized protein from Homo sapiens (Human).